The following is a 218-amino-acid chain: GTP cyclohydrolase 1 (218 aa).

Zn(2+) contacts are provided by Cys109, His112, and Cys180.

It belongs to the GTP cyclohydrolase I family. In terms of assembly, toroid-shaped homodecamer, composed of two pentamers of five dimers.

The enzyme catalyses GTP + H2O = 7,8-dihydroneopterin 3'-triphosphate + formate + H(+). The protein operates within cofactor biosynthesis; 7,8-dihydroneopterin triphosphate biosynthesis; 7,8-dihydroneopterin triphosphate from GTP: step 1/1. The sequence is that of GTP cyclohydrolase 1 (folE) from Pasteurella multocida (strain Pm70).